A 440-amino-acid chain; its full sequence is GTPase Obg (440 aa).

The 159-residue stretch at 5–163 (STFVDQTKIE…RTLRLELKVL (159 aa)) folds into the Obg domain. In terms of domain architecture, OBG-type G spans 164–338 (ADVGLVGFPS…LMSRAADLVS (175 aa)). GTP is bound by residues 170–177 (GFPSVGKS), 195–199 (FTTLK), 217–220 (DLPG), 288–291 (SQMD), and 319–321 (SSV). Mg(2+) is bound by residues Ser-177 and Thr-197. Residues 362 to 440 (YHRPEKMEFT…IGDFSFEFVQ (79 aa)) enclose the OCT domain.

The protein belongs to the TRAFAC class OBG-HflX-like GTPase superfamily. OBG GTPase family. As to quaternary structure, monomer. Mg(2+) is required as a cofactor.

The protein localises to the cytoplasm. Functionally, an essential GTPase which binds GTP, GDP and possibly (p)ppGpp with moderate affinity, with high nucleotide exchange rates and a fairly low GTP hydrolysis rate. Plays a role in control of the cell cycle, stress response, ribosome biogenesis and in those bacteria that undergo differentiation, in morphogenesis control. The sequence is that of GTPase Obg from Lactobacillus delbrueckii subsp. bulgaricus (strain ATCC BAA-365 / Lb-18).